Reading from the N-terminus, the 212-residue chain is Large ribosomal subunit protein uL1 (212 aa).

Belongs to the universal ribosomal protein uL1 family. As to quaternary structure, part of the 50S ribosomal subunit.

Its function is as follows. Binds directly to 23S rRNA. Probably involved in E site tRNA release. Functionally, protein L1 is also a translational repressor protein, it controls the translation of its operon by binding to its mRNA. The protein is Large ribosomal subunit protein uL1 of Methanobrevibacter smithii (strain ATCC 35061 / DSM 861 / OCM 144 / PS).